Reading from the N-terminus, the 402-residue chain is 1-deoxy-D-xylulose 5-phosphate reductoisomerase (402 aa).

The NADPH site is built by Thr-21, Gly-22, Ser-23, Ile-24, Gly-47, Asn-50, and Asn-127. A 1-deoxy-D-xylulose 5-phosphate-binding site is contributed by Lys-128. Glu-129 lines the NADPH pocket. Asp-151 is a binding site for Mn(2+). 1-deoxy-D-xylulose 5-phosphate-binding residues include Ser-152, Glu-153, Ser-177, and His-200. Glu-153 serves as a coordination point for Mn(2+). Gly-206 provides a ligand contact to NADPH. 1-deoxy-D-xylulose 5-phosphate is bound by residues Ser-213, Asn-218, Lys-219, and Glu-222. Residue Glu-222 coordinates Mn(2+).

This sequence belongs to the DXR family. Mg(2+) serves as cofactor. The cofactor is Mn(2+).

The catalysed reaction is 2-C-methyl-D-erythritol 4-phosphate + NADP(+) = 1-deoxy-D-xylulose 5-phosphate + NADPH + H(+). The protein operates within isoprenoid biosynthesis; isopentenyl diphosphate biosynthesis via DXP pathway; isopentenyl diphosphate from 1-deoxy-D-xylulose 5-phosphate: step 1/6. Its function is as follows. Catalyzes the NADPH-dependent rearrangement and reduction of 1-deoxy-D-xylulose-5-phosphate (DXP) to 2-C-methyl-D-erythritol 4-phosphate (MEP). The protein is 1-deoxy-D-xylulose 5-phosphate reductoisomerase of Mycobacterium ulcerans (strain Agy99).